The sequence spans 293 residues: Movement protein BC1 (293 aa).

A disordered region spans residues 207-228 (SWASRSTIGPSPSYAGSDQGDA). The segment covering 209 to 222 (ASRSTIGPSPSYAG) has biased composition (polar residues).

This sequence belongs to the begomovirus movement protein BC1 family. As to quaternary structure, binds to dimeric supercoiled plasmid DNA. In terms of processing, phosphorylated.

It localises to the host cell membrane. Its subcellular location is the host microsome membrane. The protein resides in the host endoplasmic reticulum membrane. Functionally, movement protein involved in the cell-to-cell and systemic transport of viral genomic DNA. Begomoviruses use 2 proteins to transport their DNA from cell to cell. The nuclear shuttle protein (NSP) shuttles it between nucleus and cytoplasm and the movement protein (MP) probably transports the DNA-NSP complex to the cell periphery and facilitates further movement across the cell wall. The protein is Movement protein BC1 of Tomato golden mosaic virus (strain Yellow vein) (TGMV).